A 322-amino-acid chain; its full sequence is Short-chain dehydrogenase TIC 32, chloroplastic (322 aa).

NADP(+) is bound by residues 36-42, 88-89, asparagine 115, and threonine 136; these read GASSGIG and DL. Residue serine 170 participates in substrate binding. The active-site Proton acceptor is the tyrosine 192. The interaction with calmodulin stretch occupies residues 298 to 314; the sequence is DTELAKKVWDFSTKLTD.

This sequence belongs to the short-chain dehydrogenases/reductases (SDR) family. As to quaternary structure, part of the Tic complex. Interacts with TIC110. In terms of tissue distribution, expressed in leaves and roots.

It localises to the plastid. Its subcellular location is the chloroplast inner membrane. In terms of biological role, involved in protein precursor import into chloroplasts. Part of the redox regulon consisting of TIC32, TIC 55 and TIC62. This is Short-chain dehydrogenase TIC 32, chloroplastic from Arabidopsis thaliana (Mouse-ear cress).